The primary structure comprises 81 residues: Acylphosphatase (81 aa).

Residues M1–Y81 form the Acylphosphatase-like domain. Active-site residues include R14 and N32.

This sequence belongs to the acylphosphatase family.

It catalyses the reaction an acyl phosphate + H2O = a carboxylate + phosphate + H(+). This Picrophilus torridus (strain ATCC 700027 / DSM 9790 / JCM 10055 / NBRC 100828 / KAW 2/3) protein is Acylphosphatase (acyP).